The primary structure comprises 488 residues: Germacrene A hydroxylase (488 aa).

Residues 7–23 traverse the membrane as a helical; Signal-anchor for type II membrane protein segment; sequence TSIALATILFFVYKFAT. Residues Asn169, Asn260, Asn379, and Asn410 are each glycosylated (N-linked (GlcNAc...) asparagine). Cys432 is a binding site for heme.

Belongs to the cytochrome P450 family. In terms of tissue distribution, expressed in floral glandular trichomes.

It is found in the endoplasmic reticulum membrane. The enzyme catalyses (+)-(R)-germacrene A + 3 reduced [NADPH--hemoprotein reductase] + 3 O2 = germacra-1(10),4,11(13)-trien-12-oate + 3 oxidized [NADPH--hemoprotein reductase] + 4 H2O + 4 H(+). It participates in secondary metabolite biosynthesis; terpenoid biosynthesis. Functionally, involved in the biosynthesis of germacrene-derived sesquiterpene lactones. Component of the parthenolide biosynthetic pathway; parthenolide and conjugates are promising anti-cancer drugs highly active against colon cancer cells. Catalyzes three consecutive oxidations of germacrene A to produce germacrene A acid. This is Germacrene A hydroxylase from Tanacetum parthenium (Feverfew).